The sequence spans 141 residues: Light-regulated protein 1, chloroplastic (141 aa).

The N-terminal 41 residues, Met-1–Arg-41, are a transit peptide targeting the chloroplast. Low complexity predominate over residues Ser-35–Leu-51. The interval Ser-35 to Val-58 is disordered. The interval Val-58 to Cys-132 is 2 X 15 AA approximate repeats. Tandem repeats lie at residues Val-67–Cys-81 and Val-118–Cys-132.

As to quaternary structure, component of high molecular weight thylakoid LFNRs-containing protein complexes containing LIR1, LFNR1, LFNR2, TIC62 and TROL proteins. Interacts directly with LFNR1 and LFNR2; LIR1 increases the affinity of LFNR1 and LFNR2 for TIC62 and subsequent thylakoid relocalization. May form interchain disulfide bonds with LFNR1 and LFNR2.

The protein resides in the plastid. It localises to the chloroplast thylakoid membrane. Its subcellular location is the chloroplast envelope. The protein localises to the chloroplast stroma. Functionally, thylakoid-determinant subunit of high molecular weight LFNRs-containing protein complexes. This is Light-regulated protein 1, chloroplastic from Arabidopsis thaliana (Mouse-ear cress).